The primary structure comprises 475 residues: Putative aldehyde dehydrogenase (475 aa).

NAD(+) is bound by residues 146–147 (WN) and 223–224 (GS). Catalysis depends on Glu-245, which acts as the Proton acceptor. An NAD(+)-binding site is contributed by Leu-246. Cys-279 functions as the Nucleophile in the catalytic mechanism. Glu-379 contacts NAD(+).

It belongs to the aldehyde dehydrogenase family.

It catalyses the reaction an aldehyde + NAD(+) + H2O = a carboxylate + NADH + 2 H(+). The protein is Putative aldehyde dehydrogenase of Staphylococcus aureus (strain USA300).